The primary structure comprises 401 residues: MADNPASSSSQQLLALRVMRLARPKFAPVDGFSHDPVDPTGFGELLAGKVSEISKESRQDLPIGEYLIAPQMFENIYLGETFTFYVNVVNESEKTVSSVSLKCELQTSTQRVVLPCSVQDATIESSKCEGQVISHEVKEIGQHILICSVNYKTSNGENMYFRKFFKFPVSKPIDVKTKFYSAEDNANQDVYLEAQIENTSNANMFLEKVELDPSQHYNVTSIAHEDEFGDVGKLLKPKDIRQFLFCLTPADVHNTLGYKDLTSIGKLDMSWRTSMGEKGRLQTSALQRIAPGYGDVRLSVEKTPACVDVQKPFEVSCRLYNCSERALDLQLRLEQPSNRHLVFCSPSGVSLGQLPPSQHVDFSLNVFPVTVGIQSISGIRITDTFTKRIYEHDDIAQIFVS.

It belongs to the TRAPPC13 family.

The sequence is that of Probable trafficking protein particle complex subunit 13 homolog from Caenorhabditis elegans.